Consider the following 130-residue polypeptide: MAQVQYRGTGRRKNSSARVRLVPGSGKIVMNNKAIEDYIPFASIREVVLQPFNVTETLGNYDALVTVRGGGFSGQAGATRHGIARALLEVDPDFRGPLKRAGLLTRDARMKERKKPGLKKARKASQFSKR.

The segment at 101-130 (AGLLTRDARMKERKKPGLKKARKASQFSKR) is disordered. The segment covering 111–130 (KERKKPGLKKARKASQFSKR) has biased composition (basic residues).

The protein belongs to the universal ribosomal protein uS9 family.

The polypeptide is Small ribosomal subunit protein uS9 (Levilactobacillus brevis (strain ATCC 367 / BCRC 12310 / CIP 105137 / JCM 1170 / LMG 11437 / NCIMB 947 / NCTC 947) (Lactobacillus brevis)).